A 239-amino-acid chain; its full sequence is tRNA (guanine-N(7)-)-methyltransferase (239 aa).

Positions 68, 93, 120, and 143 each coordinate S-adenosyl-L-methionine. Asp-143 is a catalytic residue. Residues Lys-147, Asp-180, and 217–220 (TKFE) contribute to the substrate site.

It belongs to the class I-like SAM-binding methyltransferase superfamily. TrmB family.

The catalysed reaction is guanosine(46) in tRNA + S-adenosyl-L-methionine = N(7)-methylguanosine(46) in tRNA + S-adenosyl-L-homocysteine. It participates in tRNA modification; N(7)-methylguanine-tRNA biosynthesis. Catalyzes the formation of N(7)-methylguanine at position 46 (m7G46) in tRNA. This Vibrio parahaemolyticus serotype O3:K6 (strain RIMD 2210633) protein is tRNA (guanine-N(7)-)-methyltransferase.